The sequence spans 286 residues: Small ribosomal subunit protein uS2 (286 aa).

Residues 213–286 are disordered; the sequence is EEQAQNNKWA…GAQEGGEWGS (74 aa). Residues 227-241 show a composition bias toward low complexity; the sequence is SPALSAAVPSSAAPV. The segment covering 244-270 has biased composition (polar residues); it reads WSSSPSKETTEWGASNTAAAAKSSWSN. The segment covering 274 to 286 has biased composition (gly residues); that stretch reads GEWGAQEGGEWGS.

Belongs to the universal ribosomal protein uS2 family. Component of the small ribosomal subunit. Mature ribosomes consist of a small (40S) and a large (60S) subunit. The 40S subunit contains about 33 different proteins and 1 molecule of RNA (18S). The 60S subunit contains about 49 different proteins and 3 molecules of RNA (28S, 5.8S and 5S). Interacts with ribosomal protein S21.

It is found in the cytoplasm. In terms of biological role, required for the assembly and/or stability of the 40S ribosomal subunit. Required for the processing of the 20S rRNA-precursor to mature 18S rRNA in a late step of the maturation of 40S ribosomal subunits. The polypeptide is Small ribosomal subunit protein uS2 (Trichoplax adhaerens (Trichoplax reptans)).